The following is a 169-amino-acid chain: Desumoylating isopeptidase 1 (169 aa).

The PPPDE domain maps to 8 to 150; that stretch reads HLVRLYVYDM…LGQALRPLLD (143 aa). H39 is a catalytic residue. A Nuclear export signal 1 motif is present at residues 84–92; it reads IFLEYLSSL. C109 is an active-site residue. A Nuclear export signal 2 motif is present at residues 140 to 154; the sequence is PLGQALRPLLDSVQI.

This sequence belongs to the DeSI family. In terms of assembly, homodimer.

It is found in the cytoplasm. Its subcellular location is the nucleus. The catalysed reaction is S-hexadecanoyl-L-cysteinyl-[protein] + H2O = L-cysteinyl-[protein] + hexadecanoate + H(+). Its function is as follows. Protease which deconjugates SUMO1, SUMO2 and SUMO3 from some substrate proteins. Has isopeptidase but not SUMO-processing activity. Collaborates with ubqln4 in the export of ubiquitinated proteins from the nucleus to the cytoplasm. Exhibits palmitoyl protein thioesterase (S-depalmitoylation) activity towards synthetic substrates 4-methylumbelliferyl-6-S-palmitoyl-beta-D-glucopyranoside and S-depalmitoylation probe 5 (DPP-5). The polypeptide is Desumoylating isopeptidase 1 (Xenopus laevis (African clawed frog)).